A 127-amino-acid polypeptide reads, in one-letter code: Large ribosomal subunit protein bL17 (127 aa).

The protein belongs to the bacterial ribosomal protein bL17 family. In terms of assembly, part of the 50S ribosomal subunit. Contacts protein L32.

The polypeptide is Large ribosomal subunit protein bL17 (Leuconostoc mesenteroides subsp. mesenteroides (strain ATCC 8293 / DSM 20343 / BCRC 11652 / CCM 1803 / JCM 6124 / NCDO 523 / NBRC 100496 / NCIMB 8023 / NCTC 12954 / NRRL B-1118 / 37Y)).